The following is a 1031-amino-acid chain: Telomerase reverse transcriptase (1031 aa).

A Reverse transcriptase domain is found at 498–852 (KEVEEWKKSL…DYCDWIGISI (355 aa)). Residues aspartate 603, aspartate 781, and aspartate 782 each coordinate Mg(2+).

This sequence belongs to the reverse transcriptase family. Telomerase subfamily. Component of the telomerase holoenzyme complex composed minimally of the catalytic subunit p123 and the telomerase RNA template component.

The protein localises to the nucleus. The protein resides in the chromosome. It is found in the telomere. It catalyses the reaction DNA(n) + a 2'-deoxyribonucleoside 5'-triphosphate = DNA(n+1) + diphosphate. Telomerase is a ribonucleoprotein enzyme essential for the replication of chromosome termini in most eukaryotes. It elongates telomeres. It is a reverse transcriptase that adds simple sequence repeats to chromosome ends by copying a template sequence within the RNA component of the enzyme. This Euplotes aediculatus (Ciliate) protein is Telomerase reverse transcriptase.